Consider the following 339-residue polypeptide: Fructose-1,6-bisphosphatase isozyme 2 (339 aa).

Positions 3 to 10 (DRSPFETD) are important for interaction with ALDOA. AMP-binding positions include valine 18 and 28-32 (TGELT). 2 residues coordinate Mg(2+): aspartate 69 and glutamate 98. Residue 113 to 114 (KY) participates in AMP binding. The Mg(2+) site is built by aspartate 119, leucine 121, and aspartate 122. Aspartate 122 serves as a coordination point for substrate. Arginine 141 contacts AMP. The short motif at 204–208 (KKKGK) is the Nuclear localization signal element. Substrate is bound at residue 213–216 (NEGY). 2 positions are modified to phosphotyrosine: tyrosine 216 and tyrosine 219. Substrate is bound by residues 245 to 249 (YVGSM), tyrosine 265, and lysine 275. Position 281 (glutamate 281) interacts with Mg(2+).

It belongs to the FBPase class 1 family. As to quaternary structure, homotetramer. Interacts with ALDOA; the interaction blocks inhibition by physiological concentrations of AMP and reduces inhibition by Ca(2+). Interacts with alpha-actinin and F-actin. Requires Mg(2+) as cofactor.

The protein resides in the cell junction. Its subcellular location is the cytoplasm. It is found in the nucleus. The protein localises to the myofibril. It localises to the sarcomere. The protein resides in the z line. The enzyme catalyses beta-D-fructose 1,6-bisphosphate + H2O = beta-D-fructose 6-phosphate + phosphate. It functions in the pathway carbohydrate biosynthesis; gluconeogenesis. Subject to complex allosteric regulation. The enzyme can assume an active R-state, or an inactive T-state. Intermediate conformations may exist. AMP acts as an allosteric inhibitor. Fructose 2,6-bisphosphate acts as a competitive inhibitor. Strongly inhibited by Ca(2+). Catalyzes the hydrolysis of fructose 1,6-bisphosphate to fructose 6-phosphate in the presence of divalent cations and probably participates in glycogen synthesis from carbohydrate precursors, such as lactate. In Bos taurus (Bovine), this protein is Fructose-1,6-bisphosphatase isozyme 2 (FBP2).